A 178-amino-acid chain; its full sequence is CDP-archaeol synthase (178 aa).

Transmembrane regions (helical) follow at residues 3-23 (LLLL…ANAV), 56-76 (FFGI…VILY), 91-111 (IILS…GSFI), and 136-156 (LLFA…LLVI).

Belongs to the CDP-archaeol synthase family. Mg(2+) is required as a cofactor.

The protein resides in the cell membrane. The catalysed reaction is 2,3-bis-O-(geranylgeranyl)-sn-glycerol 1-phosphate + CTP + H(+) = CDP-2,3-bis-O-(geranylgeranyl)-sn-glycerol + diphosphate. The protein operates within membrane lipid metabolism; glycerophospholipid metabolism. Catalyzes the formation of CDP-2,3-bis-(O-geranylgeranyl)-sn-glycerol (CDP-archaeol) from 2,3-bis-(O-geranylgeranyl)-sn-glycerol 1-phosphate (DGGGP) and CTP. This reaction is the third ether-bond-formation step in the biosynthesis of archaeal membrane lipids. This is CDP-archaeol synthase from Methanococcus maripaludis (strain C5 / ATCC BAA-1333).